Here is a 364-residue protein sequence, read N- to C-terminus: Aminomethyltransferase (364 aa).

It belongs to the GcvT family. The glycine cleavage system is composed of four proteins: P, T, L and H.

The catalysed reaction is N(6)-[(R)-S(8)-aminomethyldihydrolipoyl]-L-lysyl-[protein] + (6S)-5,6,7,8-tetrahydrofolate = N(6)-[(R)-dihydrolipoyl]-L-lysyl-[protein] + (6R)-5,10-methylene-5,6,7,8-tetrahydrofolate + NH4(+). Functionally, the glycine cleavage system catalyzes the degradation of glycine. In Escherichia coli (strain 55989 / EAEC), this protein is Aminomethyltransferase.